Consider the following 75-residue polypeptide: Small ribosomal subunit protein bS16 (75 aa).

This sequence belongs to the bacterial ribosomal protein bS16 family.

This is Small ribosomal subunit protein bS16 from Campylobacter lari (strain RM2100 / D67 / ATCC BAA-1060).